Consider the following 260-residue polypeptide: Capsid protein (260 aa).

Positions 3–20 (KRPGDIIISTPVSKVRRR) match the Bipartite nuclear localization signal motif. Residues 41-55 (KRRSWTYRPMYRKPR) carry the Nuclear localization signal motif. A zinc finger spans residues 69–86 (CEGPCKVQSYEQRDDIKH). Residues 102–123 (ITHRVGKRFCVKSIYFLGKVWM) carry the Nuclear export signal motif. Positions 202-251 (KRFFKINSHVTLFIFIQEAAKYENHTENALLLYMACTHASNPVYATMKIR) match the Bipartite nuclear localization signal motif.

This sequence belongs to the geminiviridae capsid protein family. In terms of assembly, homomultimer. Binds to single-stranded and double-stranded viral DNA. Interacts (via nuclear localization signals) with host importin alpha-1a.

It localises to the virion. The protein resides in the host nucleus. In terms of biological role, encapsidates the viral genome into characteristic twinned ('geminate') particles. Binds the genomic viral ssDNA and shuttles it into and out of the cell nucleus. Plays a role in protection of the genome from degradation, virus acquisition and transmission by insect vectors, infectivity, and systemic movement. The CP of monopartite geminiviruses is absolutely essential for virus movement. In Cynanchum acutum (Little mallow), this protein is Capsid protein.